Reading from the N-terminus, the 479-residue chain is NADH-quinone oxidoreductase subunit N 2 (479 aa).

Helical transmembrane passes span 9 to 29 (WALA…LLIV), 40 to 60 (LLLW…LMLA), 75 to 95 (RFAV…FFLS), 110 to 130 (YVLL…IDLL), 131 to 151 (SIYV…GFLR), 164 to 184 (VILG…IYGL), 206 to 226 (LLLA…AVPF), 238 to 258 (PTTI…AVIL), 272 to 292 (WIIV…VALV), 299 to 319 (LLAY…VAGG), 326 to 346 (VMLY…AVIM), 371 to 391 (ALLM…AGFF), 404 to 424 (GFVA…YFYI), and 449 to 469 (ATLA…AWFL).

It belongs to the complex I subunit 2 family. NDH-1 is composed of 14 different subunits. Subunits NuoA, H, J, K, L, M, N constitute the membrane sector of the complex.

The protein resides in the cell inner membrane. The enzyme catalyses a quinone + NADH + 5 H(+)(in) = a quinol + NAD(+) + 4 H(+)(out). NDH-1 shuttles electrons from NADH, via FMN and iron-sulfur (Fe-S) centers, to quinones in the respiratory chain. The immediate electron acceptor for the enzyme in this species is believed to be ubiquinone. Couples the redox reaction to proton translocation (for every two electrons transferred, four hydrogen ions are translocated across the cytoplasmic membrane), and thus conserves the redox energy in a proton gradient. This is NADH-quinone oxidoreductase subunit N 2 from Rhizobium meliloti (strain 1021) (Ensifer meliloti).